Here is a 354-residue protein sequence, read N- to C-terminus: Uroporphyrinogen decarboxylase (354 aa).

Residues 27 to 31 (RQAGR), D77, Y154, T209, and H327 contribute to the substrate site.

Belongs to the uroporphyrinogen decarboxylase family. As to quaternary structure, homodimer.

Its subcellular location is the cytoplasm. It catalyses the reaction uroporphyrinogen III + 4 H(+) = coproporphyrinogen III + 4 CO2. The protein operates within porphyrin-containing compound metabolism; protoporphyrin-IX biosynthesis; coproporphyrinogen-III from 5-aminolevulinate: step 4/4. In terms of biological role, catalyzes the decarboxylation of four acetate groups of uroporphyrinogen-III to yield coproporphyrinogen-III. This chain is Uroporphyrinogen decarboxylase, found in Enterobacter sp. (strain 638).